The sequence spans 320 residues: Tyrosine phosphatase H3 (320 aa).

The Tyrosine-protein phosphatase domain maps to 22–309 (NFWEFVRLEH…AFCYKAVRYA (288 aa)). Cys-250 serves as the catalytic Phosphocysteine intermediate.

Belongs to the protein-tyrosine phosphatase family.

The catalysed reaction is O-phospho-L-tyrosyl-[protein] + H2O = L-tyrosyl-[protein] + phosphate. Its function is as follows. Suppresses host immune cell adhesion and phagocytosis. This is Tyrosine phosphatase H3 (H3) from Microplitis demolitor (Parasitoid wasp).